A 550-amino-acid polypeptide reads, in one-letter code: Glucose-6-phosphate isomerase (550 aa).

D-glucose 6-phosphate-binding positions include 163 to 164, 214 to 219, Gln358, Glu362, His393, and Lys515; these read GS and SKTFTT. The Proton donor role is filled by Glu362. Residues His393 and Lys515 contribute to the active site.

This sequence belongs to the GPI family. As to quaternary structure, homodimer.

Its subcellular location is the cytoplasm. The enzyme catalyses alpha-D-glucose 6-phosphate = beta-D-fructose 6-phosphate. It participates in carbohydrate degradation; glycolysis; D-glyceraldehyde 3-phosphate and glycerone phosphate from D-glucose: step 2/4. Its function is as follows. In the cytoplasm, catalyzes the conversion of glucose-6-phosphate to fructose-6-phosphate, the second step in glycolysis, and the reverse reaction during gluconeogenesis. This Candida albicans (strain SC5314 / ATCC MYA-2876) (Yeast) protein is Glucose-6-phosphate isomerase (PGI1).